We begin with the raw amino-acid sequence, 325 residues long: Biotin synthase (325 aa).

Positions 52 to 281 constitute a Radical SAM core domain; that stretch reads YQKDDVVLCS…AKPLLICGGR (230 aa). Cys70, Cys74, and Cys77 together coordinate [4Fe-4S] cluster. [2Fe-2S] cluster contacts are provided by Ser114, Cys146, and Cys206.

This sequence belongs to the radical SAM superfamily. Biotin synthase family. As to quaternary structure, homodimer. Requires [4Fe-4S] cluster as cofactor. [2Fe-2S] cluster serves as cofactor.

It catalyses the reaction (4R,5S)-dethiobiotin + (sulfur carrier)-SH + 2 reduced [2Fe-2S]-[ferredoxin] + 2 S-adenosyl-L-methionine = (sulfur carrier)-H + biotin + 2 5'-deoxyadenosine + 2 L-methionine + 2 oxidized [2Fe-2S]-[ferredoxin]. Its pathway is cofactor biosynthesis; biotin biosynthesis; biotin from 7,8-diaminononanoate: step 2/2. In terms of biological role, catalyzes the conversion of dethiobiotin (DTB) to biotin by the insertion of a sulfur atom into dethiobiotin via a radical-based mechanism. The chain is Biotin synthase from Syntrophus aciditrophicus (strain SB).